A 290-amino-acid chain; its full sequence is Lipoyl synthase (290 aa).

Residues cysteine 34, cysteine 39, cysteine 45, cysteine 60, cysteine 64, cysteine 67, and serine 273 each coordinate [4Fe-4S] cluster. Positions 46–262 constitute a Radical SAM core domain; the sequence is WNKRHATVMI…KYIAYSKGFL (217 aa).

The protein belongs to the radical SAM superfamily. Lipoyl synthase family. It depends on [4Fe-4S] cluster as a cofactor.

The protein resides in the cytoplasm. The enzyme catalyses [[Fe-S] cluster scaffold protein carrying a second [4Fe-4S](2+) cluster] + N(6)-octanoyl-L-lysyl-[protein] + 2 oxidized [2Fe-2S]-[ferredoxin] + 2 S-adenosyl-L-methionine + 4 H(+) = [[Fe-S] cluster scaffold protein] + N(6)-[(R)-dihydrolipoyl]-L-lysyl-[protein] + 4 Fe(3+) + 2 hydrogen sulfide + 2 5'-deoxyadenosine + 2 L-methionine + 2 reduced [2Fe-2S]-[ferredoxin]. It participates in protein modification; protein lipoylation via endogenous pathway; protein N(6)-(lipoyl)lysine from octanoyl-[acyl-carrier-protein]: step 2/2. In terms of biological role, catalyzes the radical-mediated insertion of two sulfur atoms into the C-6 and C-8 positions of the octanoyl moiety bound to the lipoyl domains of lipoate-dependent enzymes, thereby converting the octanoylated domains into lipoylated derivatives. This Wolbachia pipientis subsp. Culex pipiens (strain wPip) protein is Lipoyl synthase.